Reading from the N-terminus, the 112-residue chain is Probable fatty acid-binding protein (112 aa).

Belongs to the calycin superfamily. Fatty-acid binding protein (FABP) family.

The protein is Probable fatty acid-binding protein of Anopheles gambiae (African malaria mosquito).